An 83-amino-acid chain; its full sequence is Conotoxin LiCr95 (83 aa).

A signal peptide spans 1–22 (MKLTCALIVAMLFLTACQLTTT). The propeptide occupies 23–50 (DDSRGRQKYPTERLRVKMRNPKLSKLTK). Intrachain disulfides connect cysteine 52/cysteine 67, cysteine 59/cysteine 71, and cysteine 66/cysteine 80.

Belongs to the conotoxin O1 superfamily. Expressed by the venom duct.

The protein resides in the secreted. The chain is Conotoxin LiCr95 from Conus lividus (Livid cone).